The following is a 465-amino-acid chain: Casein kinase 1-like protein 2 (465 aa).

In terms of domain architecture, Protein kinase spans 9-277 (FRLGRKIGGG…LKRLFRDLFI (269 aa)). Residues 15–23 (IGGGSFGEI) and lysine 38 each bind ATP. Aspartate 128 functions as the Proton acceptor in the catalytic mechanism. Disordered stretches follow at residues 300–344 (STPP…GIPR) and 396–428 (REAA…VSRN). A compositionally biased stretch (polar residues) spans 405 to 428 (SEPSNPQIVEAGSGSNSKIPVSRN).

Belongs to the protein kinase superfamily. CK1 Ser/Thr protein kinase family. Casein kinase I subfamily. In terms of assembly, monomer. Post-translationally, autophosphorylated.

Its subcellular location is the cytoplasm. The protein localises to the nucleus. The enzyme catalyses L-seryl-[protein] + ATP = O-phospho-L-seryl-[protein] + ADP + H(+). The catalysed reaction is L-threonyl-[protein] + ATP = O-phospho-L-threonyl-[protein] + ADP + H(+). In terms of biological role, casein kinases are operationally defined by their preferential utilization of acidic proteins such as caseins as substrates. It can phosphorylate a large number of proteins. This Arabidopsis thaliana (Mouse-ear cress) protein is Casein kinase 1-like protein 2.